A 227-amino-acid chain; its full sequence is uncharacterized protein (227 aa).

This is an uncharacterized protein from Schizosaccharomyces pombe (strain 972 / ATCC 24843) (Fission yeast).